The chain runs to 217 residues: Ribonuclease HII (217 aa).

One can recognise an RNase H type-2 domain in the interval 17-207 (KVIYGVDEAG…CVGQSVSGAR (191 aa)). A divalent metal cation is bound by residues Asp23, Glu24, and Asp116.

This sequence belongs to the RNase HII family. The cofactor is Mn(2+). Mg(2+) is required as a cofactor.

It localises to the cytoplasm. It catalyses the reaction Endonucleolytic cleavage to 5'-phosphomonoester.. Endonuclease that specifically degrades the RNA of RNA-DNA hybrids. In Nitrosomonas europaea (strain ATCC 19718 / CIP 103999 / KCTC 2705 / NBRC 14298), this protein is Ribonuclease HII.